A 442-amino-acid chain; its full sequence is Cation channel sperm-associated protein 4 (442 aa).

Over 1–66 the chain is Cytoplasmic; that stretch reads MSEKHKWWQQ…TQMYIKQLLR (66 aa). Residues 67–88 traverse the membrane as a helical segment; it reads HPAFQLLLAFLLLSNAITIALR. Residues 89-98 are Extracellular-facing; sequence TNSYLGQKHY. Residues 99-125 form a helical membrane-spanning segment; that stretch reads ELFSTIDDIVLTILICEVLLGWLNGFW. Residues 126-129 lie on the Cytoplasmic side of the membrane; that stretch reads IFWK. A helical membrane pass occupies residues 130–153; that stretch reads DGWNILNFAIVFILFMGFFIKQLD. Over 154 to 156 the chain is Extracellular; the sequence is MVA. A helical transmembrane segment spans residues 157–175; it reads ITYPLRVLRLVHVCMAVEP. At 176-188 the chain is on the cytoplasmic side; it reads LARIIKVILQSMP. A helical transmembrane segment spans residues 189–212; it reads DLANVMALILFFMLVFSVFGVTLF. At 213 to 222 the chain is on the extracellular side; the sequence is GAFVPKHFQN. Positions 223-234 form an intramembrane region, helical; Pore-forming; that stretch reads MGVALYTLFICI. At 235–255 the chain is on the extracellular side; sequence TQDGWLDIYTDFQMDEREYAM. The helical transmembrane segment at 256–283 threads the bilayer; the sequence is EVGGAIYFAVFITLGAFIGLNLFVVVVT. The Cytoplasmic portion of the chain corresponds to 284–442; that stretch reads TNLEQMMKTG…NMVNKHKFSH (159 aa).

It belongs to the cation channel sperm-associated (TC 1.A.1.19) family. In terms of assembly, component of the CatSper complex or CatSpermasome composed of the core pore-forming members CATSPER1, CATSPER2, CATSPER3 and CATSPER4 as well as auxiliary members CATSPERB, CATSPERG2, CATSPERD, CATSPERE, CATSPERZ, C2CD6/CATSPERT, SLCO6C1, TMEM249, TMEM262 and EFCAB9. HSPA1 may be an additional auxiliary complex member. The core complex members CATSPER1, CATSPER2, CATSPER3 and CATSPER4 form a heterotetrameric channel. The auxiliary CATSPERB, CATSPERG2, CATSPERD and CATSPERE subunits form a pavilion-like structure over the pore which stabilizes the complex through interactions with CATSPER4, CATSPER3, CATSPER1 and CATSPER2 respectively. SLCO6C1 interacts with CATSPERE and TMEM262/CATSPERH interacts with CATSPERB, further stabilizing the complex. C2CD6/CATSPERT interacts at least with CATSPERD and is required for targeting the CatSper complex in the flagellar membrane. Testis-specific.

The protein resides in the cell projection. Its subcellular location is the cilium. The protein localises to the flagellum membrane. It carries out the reaction Ca(2+)(in) = Ca(2+)(out). Its activity is regulated as follows. In contrast to the human ortholog, not activated by progesterone. Activated by intracellular alkalinization. Pore-forming subunit of the CatSper complex, a sperm-specific voltage-gated calcium channel that plays a central role in sperm cell hyperactivation. Controls calcium entry to mediate the hyperactivated motility, a step needed for sperm motility which is essential late in the preparation of sperm for fertilization. In Mus musculus (Mouse), this protein is Cation channel sperm-associated protein 4 (Catsper4).